We begin with the raw amino-acid sequence, 847 residues long: B-cell receptor CD22 (847 aa).

The N-terminal stretch at 1–19 (MHLLGPWLLLLVLEYLAFS) is a signal peptide. One can recognise an Ig-like V-type domain in the interval 20 to 138 (DSSKWAFEHP…MERIHLNVSE (119 aa)). Over 20 to 687 (DSSKWAFEHP…YYSPETIGRR (668 aa)) the chain is Extracellular. Residues N67, N101, and N112 are each glycosylated (N-linked (GlcNAc...) asparagine). R120 is a binding site for N-acetylneuraminate. N-linked (GlcNAc...) asparagine glycosylation is found at N135, N164, and N231. Ig-like C2-type domains follow at residues 143–235 (PHIQ…DTVQ), 242–326 (PKLE…VFLQ), 331–416 (PEPS…LDVQ), 419–500 (PKKV…VALN), 505–582 (PRDV…QTAS), and 593–676 (PRRL…STLT). Residues C161 and C219 are joined by a disulfide bond. 2 disulfide bridges follow: C265–C309 and C353–C396. Residues N363, N428, N445, N448, and N479 are each glycosylated (N-linked (GlcNAc...) asparagine). 2 disulfide bridges follow: C442-C484 and C529-C571. N574 and N634 each carry an N-linked (GlcNAc...) asparagine glycan. A disulfide bridge links C616 with C659. A helical membrane pass occupies residues 688–708 (VAVGFGSCLAILILAICGLKL). The Cytoplasmic portion of the chain corresponds to 709–847 (QRRWKRTQSQ…ENVDYVILKH (139 aa)). Phosphoserine is present on residues S725, S726, and S729. 2 short sequence motifs (ITIM motif) span residues 760-765 (ISYTTL) and 794-799 (VTYSVL). Phosphotyrosine is present on Y762. A phosphotyrosine mark is found at Y807, Y822, and Y842. 2 short sequence motifs (ITIM motif) span residues 820-825 (IHYSEL) and 840-845 (VDYVIL).

This sequence belongs to the immunoglobulin superfamily. SIGLEC (sialic acid binding Ig-like lectin) family. Predominantly monomer of isoform CD22-beta. Also found as heterodimer of isoform CD22-beta and a shorter isoform. Interacts with PTPN6/SHP-1, LYN, SYK, PIK3R1/PIK3R2 and PLCG1 upon phosphorylation. Interacts with GRB2, INPP5D and SHC1 upon phosphorylation. May form a complex with INPP5D/SHIP, GRB2 and SHC1. In terms of processing, phosphorylation of Tyr-762, Tyr-807 and Tyr-822 are involved in binding to SYK, GRB2 and SYK, respectively. Phosphorylation of Tyr-842 is involved in binding to SYK, PLCG2 and PIK3R1/PIK3R2. Post-translationally, phosphorylated on tyrosine residues by LYN.

The protein resides in the cell membrane. Its function is as follows. Most highly expressed siglec (sialic acid-binding immunoglobulin-like lectin) on B-cells that plays a role in various aspects of B-cell biology including differentiation, antigen presentation, and trafficking to bone marrow. Binds to alpha 2,6-linked sialic acid residues of surface molecules such as CD22 itself, CD45 and IgM in a cis configuration. Can also bind to ligands on other cells as an adhesion molecule in a trans configuration. Acts as an inhibitory coreceptor on the surface of B-cells and inhibits B-cell receptor induced signaling, characterized by inhibition of the calcium mobilization and cellular activation. Mechanistically, the immunoreceptor tyrosine-based inhibitory motif domain is phosphorylated by the Src kinase LYN, which in turn leads to the recruitment of the protein tyrosine phosphatase 1/PTPN6, leading to the negative regulation of BCR signaling. If this negative signaling from is of sufficient strength, apoptosis of the B-cell can be induced. The protein is B-cell receptor CD22 of Pan paniscus (Pygmy chimpanzee).